Reading from the N-terminus, the 450-residue chain is Phosphoglucosamine mutase (450 aa).

S102 serves as the catalytic Phosphoserine intermediate. Mg(2+)-binding residues include S102, D243, D245, and D247. S102 is modified (phosphoserine).

It belongs to the phosphohexose mutase family. Requires Mg(2+) as cofactor. Post-translationally, activated by phosphorylation.

The catalysed reaction is alpha-D-glucosamine 1-phosphate = D-glucosamine 6-phosphate. Functionally, catalyzes the conversion of glucosamine-6-phosphate to glucosamine-1-phosphate. In Rhizobium rhizogenes (strain K84 / ATCC BAA-868) (Agrobacterium radiobacter), this protein is Phosphoglucosamine mutase.